We begin with the raw amino-acid sequence, 325 residues long: Probable tRNA pseudouridine synthase B (325 aa).

Catalysis depends on D69, which acts as the Nucleophile. The region spanning 236-311 (LPKIVIKDSA…IAADIQRVMM (76 aa)) is the PUA domain.

This sequence belongs to the pseudouridine synthase TruB family. Type 2 subfamily.

It carries out the reaction uridine(55) in tRNA = pseudouridine(55) in tRNA. Could be responsible for synthesis of pseudouridine from uracil-55 in the psi GC loop of transfer RNAs. The sequence is that of Probable tRNA pseudouridine synthase B from Archaeoglobus fulgidus (strain ATCC 49558 / DSM 4304 / JCM 9628 / NBRC 100126 / VC-16).